The sequence spans 63 residues: Sperm protamine P1 (63 aa).

A disordered region spans residues 1–63 (MARYRRHSRS…RYSRRGRRRY (63 aa)).

This sequence belongs to the protamine P1 family. Testis.

It is found in the nucleus. It localises to the chromosome. Its function is as follows. Protamines substitute for histones in the chromatin of sperm during the haploid phase of spermatogenesis. They compact sperm DNA into a highly condensed, stable and inactive complex. The protein is Sperm protamine P1 (PRM1) of Pseudantechinus macdonnellensis (Fat-tailed marsupial mouse).